The following is a 122-amino-acid chain: MIPGEYIIKNEFITLNDGRRTLNIKVSNTGDRPVQVGSHYHFFEVNRYLEFDRKSAFGMRLDIPSGTAVRFEPGEEKTVQLVEIGGSREIYGLNDLTCGPLDREDLSNVFKKAKELGFKGVE.

The protein belongs to the urease beta subunit family. As to quaternary structure, heterotrimer of UreA (gamma), UreB (beta) and UreC (alpha) subunits. Three heterotrimers associate to form the active enzyme.

The protein resides in the cytoplasm. The catalysed reaction is urea + 2 H2O + H(+) = hydrogencarbonate + 2 NH4(+). It participates in nitrogen metabolism; urea degradation; CO(2) and NH(3) from urea (urease route): step 1/1. This chain is Urease subunit beta, found in Acetivibrio thermocellus (strain ATCC 27405 / DSM 1237 / JCM 9322 / NBRC 103400 / NCIMB 10682 / NRRL B-4536 / VPI 7372) (Clostridium thermocellum).